Consider the following 405-residue polypeptide: Eukaryotic initiation factor 4A (405 aa).

A Q motif motif is present at residues 32 to 60 (PTFESMGLREELLRGIFNYGFEKPSAIQQ). The Helicase ATP-binding domain occupies 63-233 (ILPIIKGRDT…EKFMTKPVRI (171 aa)). 76–83 (AQSGTGKT) is a binding site for ATP. Positions 181 to 184 (DEAD) match the DEAD box motif. The region spanning 244-405 (GIKQFFVSVE…EMPVNFASII (162 aa)) is the Helicase C-terminal domain.

The protein belongs to the DEAD box helicase family. eIF4A subfamily.

The protein resides in the cytoplasm. It catalyses the reaction ATP + H2O = ADP + phosphate + H(+). Its function is as follows. ATP-dependent RNA helicase which is a subunit of the eIF4F complex involved in cap recognition and is required for mRNA binding to ribosome. In the current model of translation initiation, eIF4A unwinds RNA secondary structures in the 5'-UTR of mRNAs which is necessary to allow efficient binding of the small ribosomal subunit, and subsequent scanning for the initiator codon. The protein is Eukaryotic initiation factor 4A (tifA) of Dictyostelium discoideum (Social amoeba).